The primary structure comprises 492 residues: Regulatory protein ViaA (492 aa).

The protein belongs to the ViaA family. In terms of assembly, homodimer. Interacts with RavA.

It is found in the cytoplasm. Functionally, component of the RavA-ViaA chaperone complex, which may act on the membrane to optimize the function of some of the respiratory chains. ViaA stimulates the ATPase activity of RavA. The sequence is that of Regulatory protein ViaA from Pectobacterium atrosepticum (strain SCRI 1043 / ATCC BAA-672) (Erwinia carotovora subsp. atroseptica).